A 334-amino-acid chain; its full sequence is Protein-methionine-sulfoxide reductase catalytic subunit MsrP (334 aa).

Positions 1–44 (MKKIRPLTEADVTAESAFFMQRRQVLKALGISAAALSLPSTAQA) form a signal peptide, tat-type signal. Residues Asn88, 91 to 92 (YE), Cys146, Thr181, Asn233, Arg238, and 249 to 251 (GIK) contribute to the Mo-molybdopterin site.

This sequence belongs to the MsrP family. Heterodimer of a catalytic subunit (MsrP) and a heme-binding subunit (MsrQ). Mo-molybdopterin is required as a cofactor. Predicted to be exported by the Tat system. The position of the signal peptide cleavage has not been experimentally proven.

The protein localises to the periplasm. The enzyme catalyses L-methionyl-[protein] + a quinone + H2O = L-methionyl-(S)-S-oxide-[protein] + a quinol. It catalyses the reaction L-methionyl-[protein] + a quinone + H2O = L-methionyl-(R)-S-oxide-[protein] + a quinol. Functionally, part of the MsrPQ system that repairs oxidized periplasmic proteins containing methionine sulfoxide residues (Met-O), using respiratory chain electrons. Thus protects these proteins from oxidative-stress damage caused by reactive species of oxygen and chlorine generated by the host defense mechanisms. MsrPQ is essential for the maintenance of envelope integrity under bleach stress, rescuing a wide series of structurally unrelated periplasmic proteins from methionine oxidation, including the primary periplasmic chaperone SurA and the lipoprotein Pal. The catalytic subunit MsrP is non-stereospecific, being able to reduce both (R-) and (S-) diastereoisomers of methionine sulfoxide. The sequence is that of Protein-methionine-sulfoxide reductase catalytic subunit MsrP from Salmonella dublin (strain CT_02021853).